Reading from the N-terminus, the 191-residue chain is Glycerol-3-phosphate acyltransferase (191 aa).

The next 5 membrane-spanning stretches (helical) occupy residues 10–30 (LAFIIFVYVIAAIPFGRCISA), 57–77 (FGSVVFMLDFLKAAAPVFLAV), 84–104 (FASTVGFVAVFAHVFSVYMAF), 118–138 (FVLVLPVFIVAVCTWGIFFVL), and 158–178 (YALLELYVFLPILAGTVLIFI).

The protein belongs to the PlsY family. Probably interacts with PlsX.

Its subcellular location is the cell inner membrane. The catalysed reaction is an acyl phosphate + sn-glycerol 3-phosphate = a 1-acyl-sn-glycero-3-phosphate + phosphate. It participates in lipid metabolism; phospholipid metabolism. Functionally, catalyzes the transfer of an acyl group from acyl-phosphate (acyl-PO(4)) to glycerol-3-phosphate (G3P) to form lysophosphatidic acid (LPA). This enzyme utilizes acyl-phosphate as fatty acyl donor, but not acyl-CoA or acyl-ACP. In Neorickettsia sennetsu (strain ATCC VR-367 / Miyayama) (Ehrlichia sennetsu), this protein is Glycerol-3-phosphate acyltransferase.